A 268-amino-acid chain; its full sequence is MLTDITLGQYYPGNSCIHRLDPRTKILAVLFYMVMVFLANSPLSYGILIGFIVLGAALAKLPAGLLLRSIKPLWIIILLTMVIHFVTDPGEALWHWKFITVTREGIVLGVKMSLRLVLLLLVSSLMTFTTSPIVLTDGIESLLRPFKKIGVPAHELAMMMTIALRFIPTLLEETDRIMKAQMSRGADFSSGNIMKRAKNMLPILIPLFISSFRRADELALAMEARCYRGGEGRTRMHELVYGKADALTGLVMLALFVLLAFLRWGIPA.

6 helical membrane passes run 26–46, 47–67, 73–93, 116–136, 151–171, and 246–266; these read ILAV…LSYG, ILIG…GLLL, LWII…GEAL, LVLL…IVLT, VPAH…PTLL, and ALTG…RWGI.

The protein belongs to the energy-coupling factor EcfT family. As to quaternary structure, forms a stable energy-coupling factor (ECF) transporter complex composed of 2 membrane-embedded substrate-binding proteins (S component), 2 ATP-binding proteins (A component) and 2 transmembrane proteins (T component). May be able to interact with more than 1 S component at a time.

The protein localises to the cell membrane. Its function is as follows. Transmembrane (T) component of an energy-coupling factor (ECF) ABC-transporter complex. Unlike classic ABC transporters this ECF transporter provides the energy necessary to transport a number of different substrates. The polypeptide is Energy-coupling factor transporter transmembrane protein EcfT (Acidaminococcus fermentans (strain ATCC 25085 / DSM 20731 / CCUG 9996 / CIP 106432 / VR4)).